The primary structure comprises 244 residues: DNA repair protein RecO (244 aa).

This sequence belongs to the RecO family.

In terms of biological role, involved in DNA repair and RecF pathway recombination. The sequence is that of DNA repair protein RecO from Jannaschia sp. (strain CCS1).